A 380-amino-acid polypeptide reads, in one-letter code: Cytochrome b (380 aa).

4 helical membrane passes run 28-48 (IGSL…FLSL), 72-93 (WLVR…YAHI), 109-129 (WLVG…GYVL), and 174-194 (FYSF…VHLL). 2 residues coordinate heme b: histidine 78 and histidine 92. Heme b is bound by residues histidine 178 and histidine 192. Histidine 197 is a binding site for a ubiquinone. 4 consecutive transmembrane segments (helical) span residues 222–243 (WKIL…CYIT), 285–305 (IGGV…PLAL), 317–337 (IGQL…WLGA), and 344–364 (YISL…LYMI).

The protein belongs to the cytochrome b family. The main subunits of complex b-c1 are: cytochrome b, cytochrome c1 and the Rieske protein. It depends on heme b as a cofactor.

It localises to the mitochondrion inner membrane. Component of the ubiquinol-cytochrome c reductase complex (complex III or cytochrome b-c1 complex) that is part of the mitochondrial respiratory chain. The b-c1 complex mediates electron transfer from ubiquinol to cytochrome c. Contributes to the generation of a proton gradient across the mitochondrial membrane that is then used for ATP synthesis. This is Cytochrome b (MT-CYB) from Cepaea nemoralis (Banded wood snail).